Consider the following 949-residue polypeptide: Bifunctional uridylyltransferase/uridylyl-removing enzyme (949 aa).

A disordered region spans residues 1–37 (MKETSFWGETPSLSFADDTDKPLSDRTASPPCDPASS). A uridylyltransferase region spans residues 1 to 395 (MKETSFWGET…TTGEPPKVVP (395 aa)). The uridylyl-removing stretch occupies residues 396–756 (GPEEFQTIAG…AYPIPERGVT (361 aa)). The HD domain occupies 516 to 632 (VDEHIVEAVR…LDLADTIQSP (117 aa)). 2 consecutive ACT domains span residues 757-834 (ELTV…LDIR) and 870-949 (VIEV…TPAS).

This sequence belongs to the GlnD family. Requires Mg(2+) as cofactor.

It catalyses the reaction [protein-PII]-L-tyrosine + UTP = [protein-PII]-uridylyl-L-tyrosine + diphosphate. The enzyme catalyses [protein-PII]-uridylyl-L-tyrosine + H2O = [protein-PII]-L-tyrosine + UMP + H(+). With respect to regulation, uridylyltransferase (UTase) activity is inhibited by glutamine, while glutamine activates uridylyl-removing (UR) activity. Functionally, modifies, by uridylylation and deuridylylation, the PII regulatory proteins (GlnB and homologs), in response to the nitrogen status of the cell that GlnD senses through the glutamine level. Under low glutamine levels, catalyzes the conversion of the PII proteins and UTP to PII-UMP and PPi, while under higher glutamine levels, GlnD hydrolyzes PII-UMP to PII and UMP (deuridylylation). Thus, controls uridylylation state and activity of the PII proteins, and plays an important role in the regulation of nitrogen assimilation and metabolism. This is Bifunctional uridylyltransferase/uridylyl-removing enzyme from Gluconobacter oxydans (strain 621H) (Gluconobacter suboxydans).